The following is a 101-amino-acid chain: Small ribosomal subunit protein uS14 (101 aa).

It belongs to the universal ribosomal protein uS14 family. As to quaternary structure, part of the 30S ribosomal subunit. Contacts proteins S3 and S10.

Binds 16S rRNA, required for the assembly of 30S particles and may also be responsible for determining the conformation of the 16S rRNA at the A site. The polypeptide is Small ribosomal subunit protein uS14 (Caulobacter sp. (strain K31)).